The following is a 206-amino-acid chain: Macrophage immunometabolism regulator (206 aa).

Belongs to the UNC119-binding protein family. In terms of assembly, interacts with unc119 family proteins; interaction preferentially takes place when unc119 proteins are unliganded with myristoylated proteins.

The protein localises to the cytoplasm. It is found in the cell projection. The protein resides in the cilium. Its function is as follows. May play a role in immune regulation through regulation of the macrophage function. Involved in the recruitment of macrophages in response to injury. May also play a role in trafficking of proteins via its interaction with unc119 family cargo adapters. May play a role in ciliary membrane localization. Regulates the macrophage function, by enhancing the resolution of inflammation and wound repair functions mediated by M2 macrophages. The regulation of macrophage function is, due at least in part, to the role of C5orf30 in regulating ability to inhibit glycolysis. Probably plays alaso a role in trafficking of proteins via its interaction with UNC119 and UNC119B cargo adapters: may help the release of UNC119 and UNC119B cargo or the recycling of UNC119 and UNC119B. May play a role in ciliary membrane localization via its interaction with UNC119B and protein transport into photoreceptor cells. The sequence is that of Macrophage immunometabolism regulator (macir) from Danio rerio (Zebrafish).